The chain runs to 181 residues: Crossover junction endodeoxyribonuclease RuvC (181 aa).

Active-site residues include D7, E67, and D139. The Mg(2+) site is built by D7, E67, and D139.

It belongs to the RuvC family. Homodimer which binds Holliday junction (HJ) DNA. The HJ becomes 2-fold symmetrical on binding to RuvC with unstacked arms; it has a different conformation from HJ DNA in complex with RuvA. In the full resolvosome a probable DNA-RuvA(4)-RuvB(12)-RuvC(2) complex forms which resolves the HJ. Mg(2+) serves as cofactor.

The protein localises to the cytoplasm. The enzyme catalyses Endonucleolytic cleavage at a junction such as a reciprocal single-stranded crossover between two homologous DNA duplexes (Holliday junction).. The RuvA-RuvB-RuvC complex processes Holliday junction (HJ) DNA during genetic recombination and DNA repair. Endonuclease that resolves HJ intermediates. Cleaves cruciform DNA by making single-stranded nicks across the HJ at symmetrical positions within the homologous arms, yielding a 5'-phosphate and a 3'-hydroxyl group; requires a central core of homology in the junction. The consensus cleavage sequence is 5'-(A/T)TT(C/G)-3'. Cleavage occurs on the 3'-side of the TT dinucleotide at the point of strand exchange. HJ branch migration catalyzed by RuvA-RuvB allows RuvC to scan DNA until it finds its consensus sequence, where it cleaves and resolves the cruciform DNA. The chain is Crossover junction endodeoxyribonuclease RuvC from Ralstonia nicotianae (strain ATCC BAA-1114 / GMI1000) (Ralstonia solanacearum).